Consider the following 348-residue polypeptide: VIP36-like protein (348 aa).

A signal peptide spans 1-38; that stretch reads MAATLGPLGSWQQWRRCLLARDGSRMLLLLLLLGSGQG. The Lumenal segment spans residues 39-313; it reads PQQVGAGQTF…APLPPLSGLA (275 aa). One can recognise an L-type lectin-like domain in the interval 49-274; sequence EYLKREHSLS…DVISLKLFEL (226 aa). Serine 93 and aspartate 128 together coordinate a carbohydrate. Ca(2+) contacts are provided by aspartate 159, tyrosine 161, and asparagine 163. 161–163 serves as a coordination point for a carbohydrate; it reads YPN. A glycan (N-linked (GlcNAc...) asparagine) is linked at asparagine 181. An a carbohydrate-binding site is contributed by histidine 188. Residue aspartate 191 coordinates Ca(2+). Cysteine 200 and cysteine 237 are joined by a disulfide. 258–260 is an a carbohydrate binding site; it reads GDL. A helical membrane pass occupies residues 314-334; that stretch reads LFHIVFFSLVIFVFAIVIGII. Over 335-348 the chain is Cytoplasmic; the sequence is LYNKWQEQSRKRFY. The short motif at 344–346 is the Endoplasmic reticulum retention signal element; the sequence is RKR.

It is found in the endoplasmic reticulum membrane. The protein localises to the golgi apparatus membrane. In terms of biological role, may be involved in the regulation of export from the endoplasmic reticulum of a subset of glycoproteins. May function as a regulator of ERGIC-53. In Pongo abelii (Sumatran orangutan), this protein is VIP36-like protein (LMAN2L).